Reading from the N-terminus, the 334-residue chain is DNA-directed RNA polymerase subunit alpha (334 aa).

Positions methionine 1–alanine 232 are alpha N-terminal domain (alpha-NTD). Residues glycine 268–cysteine 334 form an alpha C-terminal domain (alpha-CTD) region.

The protein belongs to the RNA polymerase alpha chain family. As to quaternary structure, in plastids the minimal PEP RNA polymerase catalytic core is composed of four subunits: alpha, beta, beta', and beta''. When a (nuclear-encoded) sigma factor is associated with the core the holoenzyme is formed, which can initiate transcription.

The protein resides in the plastid. The protein localises to the chloroplast. The enzyme catalyses RNA(n) + a ribonucleoside 5'-triphosphate = RNA(n+1) + diphosphate. DNA-dependent RNA polymerase catalyzes the transcription of DNA into RNA using the four ribonucleoside triphosphates as substrates. This Chloranthus spicatus (Chulantree) protein is DNA-directed RNA polymerase subunit alpha.